Here is a 658-residue protein sequence, read N- to C-terminus: Probable mitochondrial Rho GTPase gemA (658 aa).

Residues 1–633 are Cytoplasmic-facing; that stretch reads MKNNIKVILI…NGSNGSNNSN (633 aa). Residues 2–175 enclose the Miro 1 domain; the sequence is KNNIKVILIG…LYASQTSVFF (174 aa). GTP-binding positions include 11–18, 57–62, and 118–121; these read GDEQVGKS, DTFDDG, and NKLD. EF-hand domains are found at residues 191-226 and 311-346; these read GCER…CGHE and MGNE…TPKI. Ca(2+) contacts are provided by D204, D206, D208, S210, E215, D324, D326, D328, and D335. Residues 420–616 enclose the Miro 2 domain; that stretch reads RNIVNCYVFG…YHEMMETIVN (197 aa). GTP is bound by residues 429-436, 466-468, and 530-533; these read GAEAVGKT, LLK, and TKNN. Positions 532-575 are disordered; sequence NNNNNNNNNNNNNNNNNNNNLNNNNNNINNNNNNNNNNTTTTNA. A helical; Anchor for type IV membrane protein transmembrane segment spans residues 634–656; it reads ILTYLVIAAGVAGVGLLLSKYLA. Residues 657–658 are Mitochondrial intermembrane-facing; the sequence is KK.

Belongs to the mitochondrial Rho GTPase family.

The protein localises to the mitochondrion outer membrane. Its function is as follows. Mitochondrial GTPase involved in mitochondrial trafficking. Probably involved in control of anterograde transport of mitochondria and their subcellular distribution. This Dictyostelium discoideum (Social amoeba) protein is Probable mitochondrial Rho GTPase gemA (gemA).